A 688-amino-acid polypeptide reads, in one-letter code: Potassium-transporting ATPase ATP-binding subunit (688 aa).

Helical transmembrane passes span Pro34–Leu54, Ala62–Ala82, Val219–Leu239, and Val260–Ile280. Asp313 serves as the catalytic 4-aspartylphosphate intermediate. ATP contacts are provided by residues Asp350, Glu354, Phe383 to Ser390, and Lys401. Positions 524 and 528 each coordinate Mg(2+). 3 helical membrane passes run Phe594 to Met614, Ala622 to Leu642, and Ile662 to Leu682.

It belongs to the cation transport ATPase (P-type) (TC 3.A.3) family. Type IA subfamily. As to quaternary structure, the system is composed of three essential subunits: KdpA, KdpB and KdpC.

It localises to the cell inner membrane. It carries out the reaction K(+)(out) + ATP + H2O = K(+)(in) + ADP + phosphate + H(+). Its function is as follows. Part of the high-affinity ATP-driven potassium transport (or Kdp) system, which catalyzes the hydrolysis of ATP coupled with the electrogenic transport of potassium into the cytoplasm. This subunit is responsible for energy coupling to the transport system and for the release of the potassium ions to the cytoplasm. This is Potassium-transporting ATPase ATP-binding subunit from Yersinia pseudotuberculosis serotype I (strain IP32953).